The chain runs to 212 residues: Transcriptional regulator GfcR (212 aa).

A disordered region spans residues 38–60 (LVERSGTGTEPDTSDDGGPHDIH).

Belongs to the purine/pyrimidine phosphoribosyltransferase family. GfcR subfamily.

DNA-binding transcriptional regulator that functions as a regulator of central sugar catabolic pathways. In Haloarcula marismortui (strain ATCC 43049 / DSM 3752 / JCM 8966 / VKM B-1809) (Halobacterium marismortui), this protein is Transcriptional regulator GfcR.